The primary structure comprises 749 residues: Phosphate-regulating neutral endopeptidase PHEX (749 aa).

The Cytoplasmic portion of the chain corresponds to 1 to 20; sequence MEAETGSTMETGKGTNRGIR. Residues 21–37 form a helical; Signal-anchor for type II membrane protein membrane-spanning segment; the sequence is IALALFIGGTLVLGTLL. The Extracellular segment spans residues 38–749; the sequence is FLVSQGLLSF…NRGADSCRLW (712 aa). Residues 53-749 enclose the Peptidase M13 domain; that stretch reads YCLKPECIEA…NRGADSCRLW (697 aa). A disulfide bond links C54 and C59. N-linked (GlcNAc...) asparagine glycosylation is found at N71, N238, N263, N290, N301, N377, and N484. 4 disulfide bridges follow: C77–C733, C85–C693, C142–C406, and C617–C746. Residue H580 coordinates Zn(2+). E581 is an active-site residue. Zn(2+) contacts are provided by H584 and E642. D646 acts as the Proton donor in catalysis. N-linked (GlcNAc...) asparagine glycosylation is present at N736.

It belongs to the peptidase M13 family. Interacts with MEPE; the interaction is zinc-dependent (via ASARM motif). The cofactor is Zn(2+). Post-translationally, N-glycosylated. As to expression, expressed in bone, specifically in the osteoid and in osteocytes. Expressed in teeth, specifically in odontoblasts and ameloblasts. Expressed moderately by macrophages in the liver and has minimal expression in brown adipose tissue. Also expressed in suprabasal layers of the skin.

The protein localises to the cell membrane. In terms of biological role, peptidase that cleaves SIBLING (small integrin-binding ligand, N-linked glycoprotein)-derived ASARM peptides, thus regulating their biological activity. Cleaves ASARM peptides between Ser and Glu or Asp residues. Regulates osteogenic cell differentiation and bone mineralization through the cleavage of the MEPE-derived ASARM peptide. Promotes dentin mineralization and renal phosphate reabsorption by cleaving DMP1- and MEPE-derived ASARM peptides. Inhibits the cleavage of MEPE by CTSB/cathepsin B thus preventing MEPE degradation. This is Phosphate-regulating neutral endopeptidase PHEX (Phex) from Mus musculus (Mouse).